The chain runs to 63 residues: 2-hydroxymuconate tautomerase (63 aa).

Catalysis depends on Pro2, which acts as the Proton acceptor; via imino nitrogen.

This sequence belongs to the 4-oxalocrotonate tautomerase family. As to quaternary structure, homohexamer.

The catalysed reaction is (2Z,4E)-2-hydroxyhexa-2,4-dienedioate = (3E)-2-oxohex-3-enedioate. It functions in the pathway aromatic compound metabolism; salicylate degradation. Its function is as follows. Catalyzes the ketonization of 2-hydroxymuconate stereoselectively to yield 2-oxo-3-hexenedioate. This Pseudomonas putida (Arthrobacter siderocapsulatus) protein is 2-hydroxymuconate tautomerase (tdnL).